The chain runs to 516 residues: Protein indeterminate-domain 4, chloroplastic (516 aa).

Positions 1-26 are enriched in low complexity; it reads MSSSSYNTSVIPSSSSSAQPFFITSS. Positions 1–68 are disordered; sequence MSSSSYNTSV…QPGNPNPDAE (68 aa). A chloroplast-targeting transit peptide spans 1-70; the sequence is MSSSSYNTSV…GNPNPDAEVV (70 aa). Residue serine 73 is modified to Phosphoserine. 2 consecutive C2H2-type zinc fingers follow at residues 83–105 and 124–154; these read FICD…RRGH and YLCP…YRKH. Residues 146 to 153 carry the Nuclear localization signal motif; the sequence is IKKHYYRK. The C2H2-type 2; degenerate zinc finger occupies 159 to 182; sequence WKCEKCSKRYAVQSDWKAHSKTCG. Zn(2+)-binding residues include cysteine 161, cysteine 164, histidine 177, cysteine 181, cysteine 188, cysteine 190, histidine 203, and cysteine 207. A CCHC-type 2; atypical zinc finger spans residues 186–209; sequence YRCDCGTIFSRRDSYITHRAFCDA. The segment at 196-208 is SHR-binding; sequence RRDSYITHRAFCD. Residues 483–516 are disordered; that stretch reads NRGGGGGGRGSARGGVSLDGEAKFPEQNYPFGRG. The segment covering 484–495 has biased composition (gly residues); that stretch reads RGGGGGGRGSAR.

In terms of assembly, binds to RGA and SCL3 competitively in the nucleus.

The protein resides in the plastid. The protein localises to the chloroplast. Its subcellular location is the nucleus. Its function is as follows. Transcription factor that may act a transcriptional activator of nuclear-encoded photosynthetic gene expression. Binds DNA via its zinc fingers. Recognizes and binds to SCL3 promoter sequence 5'-AGACAA-3' to promote its expression when in complex with RGA. The protein is Protein indeterminate-domain 4, chloroplastic of Arabidopsis thaliana (Mouse-ear cress).